Reading from the N-terminus, the 837-residue chain is Leucine-zipper-like transcriptional regulator 1 (837 aa).

The residue at position 2 (alanine 2) is an N-acetylalanine. 6 Kelch repeats span residues 76 to 125 (AIYV…VYGS), 127 to 182 (MFVF…VYSD), 184 to 235 (LWIF…VCRD), 236 to 282 (KMFV…QRRY), 292 to 338 (HLYV…PERA), and 396 to 447 (AMYI…FVLG). Residues 324–352 (SSDSEVGGAEMPERASSSEDASTLTSEER) are disordered. BTB domains follow at residues 440 to 534 (CDVE…KYPR) and 664 to 733 (CDIT…NMPP).

Belongs to the LZTR1 family. As to quaternary structure, homodimer. Component of the BCR(LZTR1) E3 ubiquitin ligase complex, at least composed of CUL3, LZTR1 and RBX1. Interacts with Ras (K-Ras/KRAS, N-Ras/NRAS and H-Ras/HRAS). Interacts with RAF1. Interacts with SHOC2. Interacts with PPP1CB. In terms of processing, phosphorylated on tyrosine upon induction of apoptosis, leading to its degradation by the proteasome. As to expression, widely expressed.

Its subcellular location is the endomembrane system. The protein resides in the recycling endosome. It localises to the golgi apparatus. It functions in the pathway protein modification; protein ubiquitination. Functionally, substrate-specific adapter of a BCR (BTB-CUL3-RBX1) E3 ubiquitin-protein ligase complex that mediates ubiquitination of Ras (K-Ras/KRAS, N-Ras/NRAS and H-Ras/HRAS). Is a negative regulator of RAS-MAPK signaling that acts by controlling Ras levels and decreasing Ras association with membranes. The protein is Leucine-zipper-like transcriptional regulator 1 of Mus musculus (Mouse).